Here is a 280-residue protein sequence, read N- to C-terminus: uncharacterized protein (280 aa).

An N-terminal signal peptide occupies residues 1-21 (MRPAIKVGLSTASVYPLRAEA).

The protein to M.leprae ML2432 and S.coelicolor SCO3347.

This is an uncharacterized protein from Mycobacterium tuberculosis (strain CDC 1551 / Oshkosh).